The following is a 309-amino-acid chain: Aspartate carbamoyltransferase catalytic subunit (309 aa).

Positions 58 and 59 each coordinate carbamoyl phosphate. Residue lysine 87 participates in L-aspartate binding. Arginine 108, histidine 136, and glutamine 139 together coordinate carbamoyl phosphate. Residues arginine 168 and arginine 229 each coordinate L-aspartate. Positions 268 and 269 each coordinate carbamoyl phosphate.

It belongs to the aspartate/ornithine carbamoyltransferase superfamily. ATCase family. In terms of assembly, heterooligomer of catalytic and regulatory chains.

The catalysed reaction is carbamoyl phosphate + L-aspartate = N-carbamoyl-L-aspartate + phosphate + H(+). It functions in the pathway pyrimidine metabolism; UMP biosynthesis via de novo pathway; (S)-dihydroorotate from bicarbonate: step 2/3. Functionally, catalyzes the condensation of carbamoyl phosphate and aspartate to form carbamoyl aspartate and inorganic phosphate, the committed step in the de novo pyrimidine nucleotide biosynthesis pathway. In Methanosarcina mazei (strain ATCC BAA-159 / DSM 3647 / Goe1 / Go1 / JCM 11833 / OCM 88) (Methanosarcina frisia), this protein is Aspartate carbamoyltransferase catalytic subunit.